We begin with the raw amino-acid sequence, 593 residues long: DNA primase (593 aa).

Residues 38–62 form a CHC2-type zinc finger; sequence CPFHQEKTPSFTVSDSKRFFYCFGC. The region spanning 250-332 is the Toprim domain; sequence NRSILVEGYF…EKKISFIRLP (83 aa). Mg(2+) is bound by residues E256, D300, and D302.

It belongs to the DnaG primase family. In terms of assembly, monomer. Interacts with DnaB. The cofactor is Zn(2+). It depends on Mg(2+) as a cofactor.

It catalyses the reaction ssDNA + n NTP = ssDNA/pppN(pN)n-1 hybrid + (n-1) diphosphate.. Its function is as follows. RNA polymerase that catalyzes the synthesis of short RNA molecules used as primers for DNA polymerase during DNA replication. The sequence is that of DNA primase from Rickettsia prowazekii (strain Madrid E).